We begin with the raw amino-acid sequence, 342 residues long: Anthranilate phosphoribosyltransferase (342 aa).

5-phospho-alpha-D-ribose 1-diphosphate contacts are provided by residues glycine 83, 86-87 (GD), threonine 91, 93-96 (NIST), 111-119 (KHGGRSVSS), and serine 123. Glycine 83 contributes to the anthranilate binding site. Residue serine 95 coordinates Mg(2+). Residue arginine 169 coordinates anthranilate. The Mg(2+) site is built by aspartate 228 and glutamate 229.

The protein belongs to the anthranilate phosphoribosyltransferase family. As to quaternary structure, homodimer. Mg(2+) serves as cofactor.

It catalyses the reaction N-(5-phospho-beta-D-ribosyl)anthranilate + diphosphate = 5-phospho-alpha-D-ribose 1-diphosphate + anthranilate. It functions in the pathway amino-acid biosynthesis; L-tryptophan biosynthesis; L-tryptophan from chorismate: step 2/5. Catalyzes the transfer of the phosphoribosyl group of 5-phosphorylribose-1-pyrophosphate (PRPP) to anthranilate to yield N-(5'-phosphoribosyl)-anthranilate (PRA). The protein is Anthranilate phosphoribosyltransferase of Laribacter hongkongensis (strain HLHK9).